A 123-amino-acid chain; its full sequence is Large ribosomal subunit protein uL14 (123 aa).

Belongs to the universal ribosomal protein uL14 family. Part of the 50S ribosomal subunit. Forms a cluster with proteins L3 and L19. In the 70S ribosome, L14 and L19 interact and together make contacts with the 16S rRNA in bridges B5 and B8.

Binds to 23S rRNA. Forms part of two intersubunit bridges in the 70S ribosome. This is Large ribosomal subunit protein uL14 from Koribacter versatilis (strain Ellin345).